The sequence spans 398 residues: Lysophospholipid transporter LplT (398 aa).

Helical transmembrane passes span 17 to 37 (AVLV…FAIL), 52 to 72 (ILQI…GQIA), 90 to 110 (LGAF…LVGV), 137 to 157 (GLME…GGFL), 163 to 183 (AIAL…NFFI), 226 to 246 (LFWG…PVVL), 256 to 276 (ILNV…ARFI), 285 to 305 (MPAG…HSIW), 309 to 329 (VLLI…NALL), 352 to 372 (IAML…VPVV), and 373 to 393 (TTGI…WIWN).

This sequence belongs to the major facilitator superfamily. LplT (TC 2.A.1.42) family.

Its subcellular location is the cell inner membrane. Catalyzes the facilitated diffusion of 2-acyl-glycero-3-phosphoethanolamine (2-acyl-GPE) into the cell. The protein is Lysophospholipid transporter LplT of Photorhabdus laumondii subsp. laumondii (strain DSM 15139 / CIP 105565 / TT01) (Photorhabdus luminescens subsp. laumondii).